Consider the following 337-residue polypeptide: tRNA N6-adenosine threonylcarbamoyltransferase (337 aa).

Residues H114 and H118 each coordinate Fe cation. Residues 136–140 (LVSGG), D169, G182, D186, and N275 each bind substrate. D301 contacts Fe cation.

It belongs to the KAE1 / TsaD family. Requires Fe(2+) as cofactor.

Its subcellular location is the cytoplasm. The enzyme catalyses L-threonylcarbamoyladenylate + adenosine(37) in tRNA = N(6)-L-threonylcarbamoyladenosine(37) in tRNA + AMP + H(+). Its function is as follows. Required for the formation of a threonylcarbamoyl group on adenosine at position 37 (t(6)A37) in tRNAs that read codons beginning with adenine. Is involved in the transfer of the threonylcarbamoyl moiety of threonylcarbamoyl-AMP (TC-AMP) to the N6 group of A37, together with TsaE and TsaB. TsaD likely plays a direct catalytic role in this reaction. This Streptococcus thermophilus (strain ATCC BAA-491 / LMD-9) protein is tRNA N6-adenosine threonylcarbamoyltransferase.